Consider the following 985-residue polypeptide: DNA repair protein REV1 (985 aa).

A BRCT domain is found at 161-249; sequence QSSKIFKNCV…RLLPWQNYSL (89 aa). The tract at residues 319–329 is interaction with target DNA; the sequence is YFAHSRLHHLS. Residues Arg-324 and 362-366 each bind dCTP; that span reads DFDCF. A UmuC domain is found at 358-554; that stretch reads IFHIDFDCFF…FKLDDLPGVG (197 aa). Residues Asp-362 and Phe-363 each contribute to the Mg(2+) site. An interaction with target DNA region spans residues 395 to 397; sequence TKN. DCTP-binding positions include 402-408, Asn-414, and Asp-467; that span reads SCNYVAR. Residues Asp-467 and Glu-468 each coordinate Mg(2+). Interaction with target DNA stretches follow at residues 554-557 and 620-628; these read GHST and RKSLSIDIN.

This sequence belongs to the DNA polymerase type-Y family. As to quaternary structure, interacts with REV7. The cofactor is Mg(2+).

It localises to the nucleus. Its subcellular location is the mitochondrion. Functionally, deoxycytidyl transferase involved in DNA repair. Transfers a dCMP residue from dCTP to the 3'-end of a DNA primer in a template-dependent reaction. May assist in the first step in the bypass of abasic lesions by the insertion of a nucleotide opposite the lesion. Required for normal induction of mutations by physical and chemical agents. Involved in mitochondrial DNA mutagenesis. This is DNA repair protein REV1 (REV1) from Saccharomyces cerevisiae (strain ATCC 204508 / S288c) (Baker's yeast).